A 226-amino-acid polypeptide reads, in one-letter code: Ribonuclease 3 (226 aa).

Residues 7–129 (LPRLCRTLSY…IIGAVYLDSD (123 aa)) enclose the RNase III domain. Residue E42 coordinates Mg(2+). D46 is an active-site residue. 2 residues coordinate Mg(2+): D115 and E118. E118 is an active-site residue. Residues 156 to 226 (DAKTLLQEHL…AAQVLELLKK (71 aa)) enclose the DRBM domain.

Belongs to the ribonuclease III family. Homodimer. The cofactor is Mg(2+).

Its subcellular location is the cytoplasm. It carries out the reaction Endonucleolytic cleavage to 5'-phosphomonoester.. Functionally, digests double-stranded RNA. Involved in the processing of primary rRNA transcript to yield the immediate precursors to the large and small rRNAs (23S and 16S). Processes some mRNAs, and tRNAs when they are encoded in the rRNA operon. Processes pre-crRNA and tracrRNA of type II CRISPR loci if present in the organism. This is Ribonuclease 3 from Shewanella baltica (strain OS223).